The chain runs to 209 residues: Thymidine kinase (209 aa).

ATP contacts are provided by residues 16–23 (GPMFAGKT) and 90–93 (DEAQ). Glu91 functions as the Proton acceptor in the catalytic mechanism.

This sequence belongs to the thymidine kinase family. In terms of assembly, homotetramer.

Its subcellular location is the cytoplasm. The enzyme catalyses thymidine + ATP = dTMP + ADP + H(+). This Onion yellows phytoplasma (strain OY-M) protein is Thymidine kinase.